Reading from the N-terminus, the 1615-residue chain is DNA-directed RNA polymerase I subunit rpa1 (1615 aa).

Zn(2+) contacts are provided by C65, C68, C75, and H78. The interval 155–181 (GKSNEEGEEVMESDESDSDKMDTDENK) is disordered. A compositionally biased stretch (acidic residues) spans 160–171 (EGEEVMESDESD). Positions 172–181 (SDKMDTDENK) are enriched in basic and acidic residues. D593, D595, and D597 together coordinate Mg(2+). The tract at residues 955 to 967 (PQDYFFHCMAGRE) is bridging helix. Acidic residues predominate over residues 1305-1316 (DSLTINDDDAPA). Residues 1305-1411 (DSLTINDDDA…NSRSSNSFSD (107 aa)) are disordered. Residues 1317 to 1336 (NDDTTNNDENTSQQQPSSQN) show a composition bias toward low complexity. The segment covering 1366-1399 (EDGEEEAEEKDSDEGESEAEESDDKSDVDSDSDE) has biased composition (acidic residues). Low complexity predominate over residues 1400–1411 (ISNSRSSNSFSD).

This sequence belongs to the RNA polymerase beta' chain family. In terms of assembly, component of the RNA polymerase I (Pol I) complex consisting of at least 13 subunits.

Its subcellular location is the nucleus. The enzyme catalyses RNA(n) + a ribonucleoside 5'-triphosphate = RNA(n+1) + diphosphate. Its function is as follows. DNA-dependent RNA polymerase catalyzes the transcription of DNA into RNA using the four ribonucleoside triphosphates as substrates. Largest and catalytic core component of RNA polymerase I which synthesizes ribosomal RNA precursors. Forms the polymerase active center together with the second largest subunit. A single stranded DNA template strand of the promoter is positioned within the central active site cleft of Pol I. A bridging helix emanates from RPA1 and crosses the cleft near the catalytic site and is thought to promote translocation of Pol I by acting as a ratchet that moves the RNA-DNA hybrid through the active site by switching from straight to bent conformations at each step of nucleotide addition. The protein is DNA-directed RNA polymerase I subunit rpa1 (polr1a) of Dictyostelium discoideum (Social amoeba).